The primary structure comprises 149 residues: Transcriptional regulator MraZ (149 aa).

SpoVT-AbrB domains follow at residues 6–52 (RSHR…PYPD) and 81–124 (AEEM…DQSK).

The protein belongs to the MraZ family. As to quaternary structure, forms oligomers.

Its subcellular location is the cytoplasm. The protein resides in the nucleoid. In Nitratidesulfovibrio vulgaris (strain ATCC 29579 / DSM 644 / CCUG 34227 / NCIMB 8303 / VKM B-1760 / Hildenborough) (Desulfovibrio vulgaris), this protein is Transcriptional regulator MraZ.